We begin with the raw amino-acid sequence, 82 residues long: U1-theraphotoxin-Ct1b (82 aa).

The first 23 residues, 1 to 23 (MRTFTLIAILTCALLVIYHAAEA), serve as a signal peptide directing secretion. The propeptide occupies 24–44 (EELEAKDVIESKALATLDEER).

This sequence belongs to the neurotoxin 12 (Hwtx-2) family. 03 (juruin) subfamily. Contains 3 disulfide bonds. Two different connectivities are observed in similar proteins (C1-C3, C2-C5, C4-C6 or C1-C4, C2-C5, C3-C6). Expressed by the venom gland.

It localises to the secreted. Its function is as follows. This toxin causes paralysis and death to sheep blowflies. It does not target insect sodium channels. This is U1-theraphotoxin-Ct1b from Coremiocnemis tropix (Australian tarantula spider).